Here is a 126-residue protein sequence, read N- to C-terminus: Large ribosomal subunit protein uL22 (126 aa).

This sequence belongs to the universal ribosomal protein uL22 family. In terms of assembly, part of the 50S ribosomal subunit.

Its function is as follows. This protein binds specifically to 23S rRNA; its binding is stimulated by other ribosomal proteins, e.g. L4, L17, and L20. It is important during the early stages of 50S assembly. It makes multiple contacts with different domains of the 23S rRNA in the assembled 50S subunit and ribosome. In terms of biological role, the globular domain of the protein is located near the polypeptide exit tunnel on the outside of the subunit, while an extended beta-hairpin is found that lines the wall of the exit tunnel in the center of the 70S ribosome. This Phenylobacterium zucineum (strain HLK1) protein is Large ribosomal subunit protein uL22.